The sequence spans 512 residues: Citrate synthase (512 aa).

Active-site residues include His288, His327, and Asp383. Residues 483-512 form a disordered region; the sequence is AIPKTATGSKSQLSASIEQSFGEKISPQSH. Residues 488 to 501 are compositionally biased toward polar residues; sequence ATGSKSQLSASIEQ.

The protein belongs to the citrate synthase family.

It is found in the cytoplasm. It carries out the reaction oxaloacetate + acetyl-CoA + H2O = citrate + CoA + H(+). The protein operates within carbohydrate metabolism; tricarboxylic acid cycle; isocitrate from oxaloacetate: step 1/2. The protein is Citrate synthase (gltA) of Dictyostelium discoideum (Social amoeba).